A 327-amino-acid polypeptide reads, in one-letter code: Aspartate--ammonia ligase (327 aa).

The protein belongs to the class-II aminoacyl-tRNA synthetase family. AsnA subfamily.

The protein resides in the cytoplasm. It carries out the reaction L-aspartate + NH4(+) + ATP = L-asparagine + AMP + diphosphate + H(+). Its pathway is amino-acid biosynthesis; L-asparagine biosynthesis; L-asparagine from L-aspartate (ammonia route): step 1/1. This chain is Aspartate--ammonia ligase, found in Bacillus cereus (strain AH187).